The chain runs to 115 residues: uncharacterized protein (115 aa).

This sequence to M.tuberculosis Rv3073c.

This is an uncharacterized protein from Escherichia coli (strain K12).